Reading from the N-terminus, the 100-residue chain is MGCCGCGSCGGCGGGCGGCGGGCGGGCGGGCGGVCGSCTTCRCYRVGCCSSCCPCCRGCCGGCCSTPVICCCRRTCRSCGCGCRKGCCQQKCCCQKQCCC.

Positions 4–82 (CGCGSCGGCG…RRTCRSCGCG (79 aa)) are 13 X 2 AA repeats of CG.

It belongs to the KRTAP type 28 family.

In terms of biological role, in the hair cortex, hair keratin intermediate filaments are embedded in an interfilamentous matrix, consisting of hair keratin-associated proteins (KRTAP), which are essential for the formation of a rigid and resistant hair shaft through their extensive disulfide bond cross-linking with abundant cysteine residues of hair keratins. The matrix proteins include the high-sulfur and high-glycine-tyrosine keratins. The sequence is that of Small cysteine and glycine repeat-containing protein 3 from Homo sapiens (Human).